We begin with the raw amino-acid sequence, 141 residues long: Hemoglobin subunit alpha (141 aa).

In terms of domain architecture, Globin spans 1–141; that stretch reads VLSPADKSNV…VSTVLTSKYR (141 aa). Ser-3 bears the Phosphoserine mark. N6-succinyllysine occurs at positions 7 and 11. Lys-16 carries the post-translational modification N6-acetyllysine; alternate. Lys-16 carries the post-translational modification N6-succinyllysine; alternate. Position 24 is a phosphotyrosine (Tyr-24). A Phosphoserine modification is found at Ser-35. An N6-succinyllysine modification is found at Lys-40. Ser-49 is modified (phosphoserine). His-58 contributes to the O2 binding site. Residue His-87 participates in heme b binding. Ser-102 is subject to Phosphoserine. Thr-108 is modified (phosphothreonine). Phosphoserine is present on residues Ser-124 and Ser-131. 2 positions are modified to phosphothreonine: Thr-134 and Thr-137. Ser-138 carries the post-translational modification Phosphoserine.

The protein belongs to the globin family. Heterotetramer of two alpha chains and two beta chains. As to expression, red blood cells.

Involved in oxygen transport from the lung to the various peripheral tissues. Functionally, hemopressin acts as an antagonist peptide of the cannabinoid receptor CNR1. Hemopressin-binding efficiently blocks cannabinoid receptor CNR1 and subsequent signaling. The sequence is that of Hemoglobin subunit alpha (HBA) from Mico argentatus (Silvery marmoset).